A 218-amino-acid polypeptide reads, in one-letter code: Ribose-5-phosphate isomerase A (218 aa).

Residues 28–31 (TGST), 81–84 (DGAD), and 94–97 (KGGG) each bind substrate. Glutamate 103 (proton acceptor) is an active-site residue. A substrate-binding site is contributed by lysine 121.

Belongs to the ribose 5-phosphate isomerase family. Homodimer.

The enzyme catalyses aldehydo-D-ribose 5-phosphate = D-ribulose 5-phosphate. Its pathway is carbohydrate degradation; pentose phosphate pathway; D-ribose 5-phosphate from D-ribulose 5-phosphate (non-oxidative stage): step 1/1. Its function is as follows. Catalyzes the reversible conversion of ribose-5-phosphate to ribulose 5-phosphate. The protein is Ribose-5-phosphate isomerase A of Shewanella sediminis (strain HAW-EB3).